The primary structure comprises 2282 residues: MVPLSGEQLAQFYRVDGEMALAEAFEKEFLTRELQENDQCMNHPLYQLLQRYAKARAEFSLNVLEFEALRRKCKALANELWTVREQTFAGTGTCGDGKVVHASHISSVAALQESALADFSSNLQDLMKQSFFQCSQSTYEVDATRIKIEQKIYETLNLHPVLSNLPADSPVVLNPPIDAMQLTAAIGELRLCISILFAFLRKGITDKRFLADVRGWTVKLVATQLRIATVHDHLFVLFHVLRSPSGIANWATSLVQLPTEQDLRWGSSEFQHILVVMACILLPIKKRNEFLEKLKLDMNRSIDVVQEEMWAIVDSDGEDCSGSDSISELKEGDLVALIDQIPFGMVFRALTLVDRKLDGTWRLGEDQVRGTHVMKAIAFGTIFVELLGNGLMTYNADRYRQFAKRVARLIKHTVYYVSDLYRILLERTRSVQVVLDDYETTRINLELDVFVVRAAQYIYRSRKIGTWQYLSGFPFDQLSVGALWKLYYFLHLDEFNEELITAVGTDFRDLCIGPNQREKFRNGLVGMPSEDLYYLLQVFSNMALAREIDDFEFIETVALNLFDIGYLNEYTKDFCYKAVKDLLFNIVYKHPSLVSSLLQYMKQDVAQADHSALYVFKSLPLDRWRPQWDDFELLANWILNYGFDAVQSSTARVILIHLNYNFDSNNELFLPHDIHVRIACLITEIYSKHVPELLGNPQGLVASVSSLVKNKTAQDQFLAWCWNMVSLLRLHCMDQSPTVINGMMKNPALILRYVLELERAQQIYQGVTENRPLAIYLAILISTWGHSVPQICHQGFEQIRLLLNDHRYVVVVRCLQLITPLFLECPDSLSHCESFKSILISLMAADKYYARFTKDQFKPESNSPCLTELPNWTKDPAIIGLLDAMAGVAYQFPDAWHSMKEFFRPYFSVSSIILHSPSSATVFLSIFTLELEYELTEIQSGIWHEVIRGIGLPSSPKLTIETAIKKSTSILGYPSFPPSSLAVFKLANLVANCTIKNFMYPIVCQLFFTIYLSRLPLSTEEQRFANCFGVSDQIYECNVGLMKRIKKQLYDAECFYNSASVSESDERQRSFYNHCTRLFKTFQLWLEDTQLNKISTNAVNLPPQFDRYRLAAIFRGNRDHWTDFIDFRGIRSDHRDLADAWQKLCYRYKPEVSTVATNSPARSLASSHSVTDLQDFKQSIFKRLETYDAPAPAPLVFKPTPLIPPAKFTTQSSNSFLVMYNEHLLLDSFYLEQVPKLYIVEDKVLYKDASCSNGCTESRKVLVRYKVSKLDKNLSAVLRENRSAHEALLQRESKLPDRIVMASVRIDAFLRQIVEAYREFKLSGETNVCAKLNKVGSTLFYEFVGKMNDYNQLCPLTKDVCSLGISQLGFFMRENQNDEGIKLLNITLGRPEMISLLSELLVPASCPPQFFLRMYEFVIDSHIKRHDTQVLFVMLSKFDIIAWMNRYRPKLVDVRRLVELILRGLEGWTQKNAVLIQDLLQRHLMHLFEFDFPEYYGDILQMVLAACSLKKIMAQVLLELLNSMRRRVECQPLTFGLGLVSIKEDFRSFATKQKILSYKDLIDTTVLLTQHFQQERLNHGLHGLYPVHSDYCEVLSLLLGSVGHATVVAAVHAYPGVLADELINWLWPPLCDMFSPWLTPYFPQNMKGQQQVANWIQQVASDSSILPPWSELHSETAFRMVKVFEHCIQYLMDTFPSSSALLGHLFSWYELNFAHPALPRHVAVPIHTNLMNLAWDRFRPAPVHITGFSRILQQFIPEAHKFVGHIFIRIAWTPWLQQNIQSWDYQLRYQMLSALLMIFIKISYEPNAREGLKIVTLLQEACNYPWHMLEYQGVEAVLDWFVLSAEPSVVLKMPSESEVVDSAVLDLLQVASSMKFNSGNPLESTALQSQVQAKRILYVRTTVRLLNSCGAKYQKLLGTKQGVQAFHNAVLGLFNIVETVLLQIRSTKDREFEARNLIGEVIVSLQSQGEYTSKLFTEAIVLWTENCRTSDSYIVPSVLDAVGMCKSFSLNLYLLLEEMLFHYFGKSWHGQVNDGGDPVLDASWVKALHKVGLQTVKGFDEEMLVKHRCLLVLHLLTVQKLRTAGSSGERIVVLQKLFQLLENVKVSDQTESKLILLWSLMAVVGVEIMKASSNGQNHLLTLARYLQTCSKDAEGWGEGLLGAIGIRKDGISIRRKVVAKCLSCIVFLLFGEDSGEALEASESGPPSIDCANRCKEYDQAMGDLKQTLTNKRYGDMHIKTRAAINLVENTAMIANIGENVCKIVRLFCDEHFFHSVEEVWRC.

The protein belongs to the EPG5 family.

Its function is as follows. Involved in autophagy. The polypeptide is Ectopic P granules protein 5 homolog (Aedes aegypti (Yellowfever mosquito)).